The following is a 178-amino-acid chain: MPKPEKIQKVEELYQKMLNANALIFTEFKGLSVADLTQLRGKIRPLNAEYRVVKNTLALRAIQRMYPDKDLEKFFVGPTAITYCYDDPFGVLKALVDYAKDHELLKFKGGIIDGEVYSADEIRELAKLPPKEVILSQVVGSISAPLSSLVWNLKWPVNKLVWTLDAIAKEKEKISINQ.

It belongs to the universal ribosomal protein uL10 family. As to quaternary structure, part of the ribosomal stalk of the 50S ribosomal subunit. The N-terminus interacts with L11 and the large rRNA to form the base of the stalk. The C-terminus forms an elongated spine to which L12 dimers bind in a sequential fashion forming a multimeric L10(L12)X complex.

Its function is as follows. Forms part of the ribosomal stalk, playing a central role in the interaction of the ribosome with GTP-bound translation factors. This chain is Large ribosomal subunit protein uL10, found in Dictyoglomus turgidum (strain DSM 6724 / Z-1310).